The following is a 574-amino-acid chain: Proline--tRNA ligase (574 aa).

It belongs to the class-II aminoacyl-tRNA synthetase family. ProS type 1 subfamily. In terms of assembly, homodimer.

The protein localises to the cytoplasm. It carries out the reaction tRNA(Pro) + L-proline + ATP = L-prolyl-tRNA(Pro) + AMP + diphosphate. Catalyzes the attachment of proline to tRNA(Pro) in a two-step reaction: proline is first activated by ATP to form Pro-AMP and then transferred to the acceptor end of tRNA(Pro). As ProRS can inadvertently accommodate and process non-cognate amino acids such as alanine and cysteine, to avoid such errors it has two additional distinct editing activities against alanine. One activity is designated as 'pretransfer' editing and involves the tRNA(Pro)-independent hydrolysis of activated Ala-AMP. The other activity is designated 'posttransfer' editing and involves deacylation of mischarged Ala-tRNA(Pro). The misacylated Cys-tRNA(Pro) is not edited by ProRS. The chain is Proline--tRNA ligase from Ralstonia pickettii (strain 12J).